The sequence spans 333 residues: Casein kinase II subunit alpha-2 (333 aa).

Residues 34–319 form the Protein kinase domain; sequence YEVVRKVGRG…AREAMAHPYF (286 aa). ATP-binding positions include 40–48 and K63; that span reads VGRGKYSEV. The active-site Proton acceptor is D151.

This sequence belongs to the protein kinase superfamily. Ser/Thr protein kinase family. CK2 subfamily. In terms of assembly, monomer. In terms of processing, autophosphorylated.

It is found in the cytoplasm. The enzyme catalyses L-seryl-[protein] + ATP = O-phospho-L-seryl-[protein] + ADP + H(+). It catalyses the reaction L-threonyl-[protein] + ATP = O-phospho-L-threonyl-[protein] + ADP + H(+). Functionally, casein kinases are operationally defined by their preferential utilization of acidic proteins such as caseins as substrates. It can phosphorylate a large number of proteins. Involved in photoperiod sensitivity (PS). Increases days-to-heading under natural day (ND) and long day (LD) conditions, but not under short day (SD) conditions. This chain is Casein kinase II subunit alpha-2, found in Oryza sativa subsp. indica (Rice).